Here is a 170-residue protein sequence, read N- to C-terminus: Cysteine-rich venom protein VAR4 (170 aa).

A signal peptide spans 1 to 22 (MILLKLYLTLAAILCQSRGTTS). The 129-residue stretch at 41-169 (NKHNDLRRTV…PLKYFLVCQY (129 aa)) folds into the SCP domain. Disulfide bonds link cysteine 77–cysteine 156, cysteine 95–cysteine 170, and cysteine 151–cysteine 167.

It belongs to the CRISP family. Post-translationally, contains 8 disulfide bonds. Expressed by the venom gland.

The protein resides in the secreted. Its function is as follows. Blocks ryanodine receptors, and potassium channels. The chain is Cysteine-rich venom protein VAR4 from Varanus acanthurus (Ridge-tailed monitor).